A 217-amino-acid polypeptide reads, in one-letter code: Ribosomal RNA small subunit methyltransferase G (217 aa).

S-adenosyl-L-methionine is bound by residues Gly-76, Phe-81, 128–129 (LE), and Arg-142.

This sequence belongs to the methyltransferase superfamily. RNA methyltransferase RsmG family.

The protein resides in the cytoplasm. It carries out the reaction guanosine(527) in 16S rRNA + S-adenosyl-L-methionine = N(7)-methylguanosine(527) in 16S rRNA + S-adenosyl-L-homocysteine. In terms of biological role, specifically methylates the N7 position of guanine in position 527 of 16S rRNA. The chain is Ribosomal RNA small subunit methyltransferase G from Rhizorhabdus wittichii (strain DSM 6014 / CCUG 31198 / JCM 15750 / NBRC 105917 / EY 4224 / RW1) (Sphingomonas wittichii).